The chain runs to 298 residues: Mitochondrial dicarboxylate/tricarboxylate transporter DTC (298 aa).

3 Solcar repeats span residues 12–93, 103–194, and 202–292; these read WTTV…LTAK, LPLY…SAEY, and GEMS…ITKF. 6 helical membrane-spanning segments follow: residues 18-38, 68-88, 109-129, 169-189, 208-228, and 268-288; these read FVNG…IDMI, GLSA…GSFK, ALCG…ADLA, GCGP…ASYD, VGAS…FDFV, and FPVY…FLNQ.

Belongs to the mitochondrial carrier (TC 2.A.29) family. Highly expressed in flower buds and at lower levels in roots, leaves and stems.

Its subcellular location is the mitochondrion inner membrane. Functionally, catalyzes the transport of dicarboxylates, such as oxoglutarate, oxaloacetate, malate, and succinate, and of tricarboxylates, such as citrate, isocitrate, cis-aconitate, and trans-aconitate by a counter-exchange mechanism across the inner mitochondrial membrane. Substrate preference in reconstituted proteoliposomes is oxaloacetate &gt; malonate &gt; malate &gt; maleate &gt; succinate &gt; oxoglutarate &gt; citrate &gt; trans-aconitate &gt; cis-aconitate &gt; sulfate &gt; isocitrate. May be important for plant metabolic functions requiring organic acid flux to or from the mitochondria, such as nitrogen assimilation, export of reducing equivalents from the mitochondria, and fatty acid elongation. This chain is Mitochondrial dicarboxylate/tricarboxylate transporter DTC (DTC), found in Arabidopsis thaliana (Mouse-ear cress).